The following is a 291-amino-acid chain: Ribosomal protein L11 methyltransferase (291 aa).

4 residues coordinate S-adenosyl-L-methionine: T136, G159, D181, and N228.

Belongs to the methyltransferase superfamily. PrmA family.

The protein resides in the cytoplasm. The enzyme catalyses L-lysyl-[protein] + 3 S-adenosyl-L-methionine = N(6),N(6),N(6)-trimethyl-L-lysyl-[protein] + 3 S-adenosyl-L-homocysteine + 3 H(+). Functionally, methylates ribosomal protein L11. The chain is Ribosomal protein L11 methyltransferase from Sinorhizobium fredii (strain NBRC 101917 / NGR234).